We begin with the raw amino-acid sequence, 341 residues long: Cytochrome c biogenesis protein CcsA (341 aa).

8 helical membrane passes run 16–36, 37–57, 68–88, 97–117, 142–162, 249–269, 276–296, and 310–330; these read LILLLTMLIYWAGAAFPGMSI, LPTLGTAGVAIANLSIATLLG, LSNLYESLFFLAWGVTAVHLI, LVGVVTTPVAMGITAFAALSL, VMMLSYATLMVGAVLAIAFLI, IIGLGFPLLTIGIIAGAVWAN, WSWDPKETWALITWLVFAAYL, and AILAASGFIVVWVCYLGVNLL.

This sequence belongs to the CcmF/CycK/Ccl1/NrfE/CcsA family. May interact with ccs1.

It localises to the cellular thylakoid membrane. Its function is as follows. Required during biogenesis of c-type cytochromes (cytochrome c6 and cytochrome f) at the step of heme attachment. This is Cytochrome c biogenesis protein CcsA from Rippkaea orientalis (strain PCC 8801 / RF-1) (Cyanothece sp. (strain PCC 8801)).